The following is a 160-amino-acid chain: Cytochrome b6-f complex subunit 4 (160 aa).

The next 3 helical transmembrane spans lie at 36 to 56, 95 to 115, and 131 to 151; these read LLYI…GLAV, LLGI…PFIE, and SVFL…CLPI.

This sequence belongs to the cytochrome b family. PetD subfamily. In terms of assembly, the 4 large subunits of the cytochrome b6-f complex are cytochrome b6, subunit IV (17 kDa polypeptide, PetD), cytochrome f and the Rieske protein, while the 4 small subunits are PetG, PetL, PetM and PetN. The complex functions as a dimer.

The protein resides in the cellular thylakoid membrane. Its function is as follows. Component of the cytochrome b6-f complex, which mediates electron transfer between photosystem II (PSII) and photosystem I (PSI), cyclic electron flow around PSI, and state transitions. This Prochlorococcus marinus subsp. pastoris (strain CCMP1986 / NIES-2087 / MED4) protein is Cytochrome b6-f complex subunit 4.